The primary structure comprises 353 residues: Nicotinate-nucleotide--dimethylbenzimidazole phosphoribosyltransferase (353 aa).

The active-site Proton acceptor is the Glu318.

It belongs to the CobT family.

The enzyme catalyses 5,6-dimethylbenzimidazole + nicotinate beta-D-ribonucleotide = alpha-ribazole 5'-phosphate + nicotinate + H(+). Its pathway is nucleoside biosynthesis; alpha-ribazole biosynthesis; alpha-ribazole from 5,6-dimethylbenzimidazole: step 1/2. Its function is as follows. Catalyzes the synthesis of alpha-ribazole-5'-phosphate from nicotinate mononucleotide (NAMN) and 5,6-dimethylbenzimidazole (DMB). This Desulforudis audaxviator (strain MP104C) protein is Nicotinate-nucleotide--dimethylbenzimidazole phosphoribosyltransferase.